A 596-amino-acid chain; its full sequence is Elongation factor 4 (596 aa).

Positions 2–183 (KNIRNFSIIA…AIITRIPAPN (182 aa)) constitute a tr-type G domain. Residues 14-19 (DHGKST) and 130-133 (NKID) contribute to the GTP site.

It belongs to the TRAFAC class translation factor GTPase superfamily. Classic translation factor GTPase family. LepA subfamily.

The protein resides in the cell inner membrane. The enzyme catalyses GTP + H2O = GDP + phosphate + H(+). Functionally, required for accurate and efficient protein synthesis under certain stress conditions. May act as a fidelity factor of the translation reaction, by catalyzing a one-codon backward translocation of tRNAs on improperly translocated ribosomes. Back-translocation proceeds from a post-translocation (POST) complex to a pre-translocation (PRE) complex, thus giving elongation factor G a second chance to translocate the tRNAs correctly. Binds to ribosomes in a GTP-dependent manner. The polypeptide is Elongation factor 4 (Campylobacter concisus (strain 13826)).